A 232-amino-acid chain; its full sequence is Ashwin (232 aa).

Composition is skewed to basic and acidic residues over residues 64 to 97 (DLPK…DGLR) and 116 to 127 (KKTENGDNDRLR). The tract at residues 64–232 (DLPKSRWGKM…KRKIQHVTWP (169 aa)) is disordered. Polar residues predominate over residues 130–140 (PQASATSNTFR). Residue S143 is modified to Phosphoserine. Positions 144–156 (DSSSSVSPLVLSS) are enriched in low complexity. Basic and acidic residues predominate over residues 163 to 179 (KMEHGNNDNKQNHDLTH). 3 positions are modified to phosphoserine: S182, S189, and S193. The residue at position 198 (T198) is a Phosphothreonine.

Belongs to the ashwin family. In terms of assembly, component of the tRNA-splicing ligase complex.

Its subcellular location is the nucleus. The sequence is that of Ashwin from Bos taurus (Bovine).